The chain runs to 162 residues: ATP synthase subunit b (162 aa).

A helical membrane pass occupies residues 4–24 (INWGSIIYQLIAFCVLLWLLS).

The protein belongs to the ATPase B chain family. In terms of assembly, F-type ATPases have 2 components, F(1) - the catalytic core - and F(0) - the membrane proton channel. F(1) has five subunits: alpha(3), beta(3), gamma(1), delta(1), epsilon(1). F(0) has three main subunits: a(1), b(2) and c(10-14). The alpha and beta chains form an alternating ring which encloses part of the gamma chain. F(1) is attached to F(0) by a central stalk formed by the gamma and epsilon chains, while a peripheral stalk is formed by the delta and b chains.

It localises to the cell membrane. F(1)F(0) ATP synthase produces ATP from ADP in the presence of a proton or sodium gradient. F-type ATPases consist of two structural domains, F(1) containing the extramembraneous catalytic core and F(0) containing the membrane proton channel, linked together by a central stalk and a peripheral stalk. During catalysis, ATP synthesis in the catalytic domain of F(1) is coupled via a rotary mechanism of the central stalk subunits to proton translocation. In terms of biological role, component of the F(0) channel, it forms part of the peripheral stalk, linking F(1) to F(0). In Halalkalibacterium halodurans (strain ATCC BAA-125 / DSM 18197 / FERM 7344 / JCM 9153 / C-125) (Bacillus halodurans), this protein is ATP synthase subunit b.